The following is a 112-amino-acid chain: Integration host factor subunit alpha (112 aa).

This sequence belongs to the bacterial histone-like protein family. As to quaternary structure, heterodimer of an alpha and a beta chain.

Its function is as follows. This protein is one of the two subunits of integration host factor, a specific DNA-binding protein that functions in genetic recombination as well as in transcriptional and translational control. The protein is Integration host factor subunit alpha of Rhizobium johnstonii (strain DSM 114642 / LMG 32736 / 3841) (Rhizobium leguminosarum bv. viciae).